Reading from the N-terminus, the 90-residue chain is Lectin-1 (90 aa).

Gln-1 bears the Pyrrolidone carboxylic acid mark. Cys-46 and Cys-71 are joined by a disulfide.

In terms of processing, the N-terminus is blocked. Post-translationally, contains seven disulfide bonds. Proteolytically cleaved. Major mature form may consist of cleaved, disulfide-bonded N-terminal and C-terminal chains.

Functionally, lectin with specificity for complex N-linked glycans and O-linked glycans. Has hemagglutinating activity towards rabbit erythrocytes. In Hypnea musciformis (Red alga), this protein is Lectin-1.